Consider the following 274-residue polypeptide: Large ribosomal subunit protein uL2cz/uL2cy (274 aa).

Disordered stretches follow at residues 1–21 (MAIH…VDSQ) and 224–252 (NPVD…GYPA).

It belongs to the universal ribosomal protein uL2 family. Part of the 50S ribosomal subunit.

It is found in the plastid. The protein resides in the chloroplast. In Olimarabidopsis pumila (Dwarf rocket), this protein is Large ribosomal subunit protein uL2cz/uL2cy (rpl2-A).